The following is a 95-amino-acid chain: Large ribosomal subunit protein uL23 (95 aa).

It belongs to the universal ribosomal protein uL23 family. In terms of assembly, part of the 50S ribosomal subunit. Contacts protein L29, and trigger factor when it is bound to the ribosome.

Its function is as follows. One of the early assembly proteins it binds 23S rRNA. One of the proteins that surrounds the polypeptide exit tunnel on the outside of the ribosome. Forms the main docking site for trigger factor binding to the ribosome. This Desulfitobacterium hafniense (strain Y51) protein is Large ribosomal subunit protein uL23.